The chain runs to 350 residues: Protein TRIGALACTOSYLDIACYLGLYCEROL 1, chloroplastic (350 aa).

Residues 67 to 86 form a disordered region; that stretch reads SMSMLEEETSTENNAPSQEA. Residues 98 to 117 form a helical membrane-spanning segment; sequence YIWRGLSVPIIAGQVVLRIL. At 118–136 the chain is on the stromal side; it reads KGKIHWRNTLQQLERTGPK. A helical transmembrane segment spans residues 137–157; that stretch reads SLGVCLLTSTFVGMAFTIQFV. Residues 158–168 lie on the Chloroplast intermembrane side of the membrane; it reads REFTRLGLNRS. Residues 169 to 189 form a helical membrane-spanning segment; that stretch reads IGGVLALAFSRELSPVITSIV. Residues 190-229 are Stromal-facing; sequence VAGRMGSAFAAELGTMQVSEQTDTLRVLGADPIDYLITPR. A helical transmembrane segment spans residues 230–250; sequence VIASCLALPFLTLMCFTVGMA. Over 251–288 the chain is Chloroplast intermembrane; that stretch reads SSALLSDAVYGISINIIMDSAHRALRPWDIVSAMIKSQ. Residues 289–309 traverse the membrane as a helical segment; the sequence is VFGAIISVISCSWGVTTTGGA. The Stromal segment spans residues 310-318; the sequence is KGVGESTTS. The helical transmembrane segment at 319-339 threads the bilayer; that stretch reads AVVMSLVGIFIADFVLSSFFF. Topologically, residues 340 to 350 are chloroplast intermembrane; it reads QGAGDSLKNCV.

Belongs to the MlaE permease family. Permease subunit of the TGD complex, a lipid translocator at the inner chloroplast envelope membrane made of TGD1, TGD2 and TGD3. Interacts with TGD2 and TGD3 with an overall subunit stoichiometry of 2 TGD1, 2 TGD3 and 8 to 12 TGD2. Interacts with TGD5. High levels in green tissues, but low levels in nongreen tissues such as roots.

The protein resides in the plastid. Its subcellular location is the chloroplast inner membrane. Required during embryogenesis. Permease involved in lipid transfer from the endoplasmic reticulum (ER) to plastids, and necessary for thylakoids formation. This is Protein TRIGALACTOSYLDIACYLGLYCEROL 1, chloroplastic from Arabidopsis thaliana (Mouse-ear cress).